The sequence spans 49 residues: Large ribosomal subunit protein bL33 (49 aa).

This sequence belongs to the bacterial ribosomal protein bL33 family.

The sequence is that of Large ribosomal subunit protein bL33 from Caldanaerobacter subterraneus subsp. tengcongensis (strain DSM 15242 / JCM 11007 / NBRC 100824 / MB4) (Thermoanaerobacter tengcongensis).